The sequence spans 353 residues: Probable dual-specificity RNA methyltransferase RlmN (353 aa).

Glu95 functions as the Proton acceptor in the catalytic mechanism. The Radical SAM core domain occupies 103–333 (DGGRKTICIS…PILNRRSPGR (231 aa)). Cys110 and Cys339 are oxidised to a cystine. The [4Fe-4S] cluster site is built by Cys117, Cys121, and Cys124. S-adenosyl-L-methionine-binding positions include 164 to 165 (GE), Ser196, 219 to 221 (SLN), and Asn296. The active-site S-methylcysteine intermediate is Cys339.

The protein belongs to the radical SAM superfamily. RlmN family. [4Fe-4S] cluster is required as a cofactor.

The protein resides in the cytoplasm. The enzyme catalyses adenosine(2503) in 23S rRNA + 2 reduced [2Fe-2S]-[ferredoxin] + 2 S-adenosyl-L-methionine = 2-methyladenosine(2503) in 23S rRNA + 5'-deoxyadenosine + L-methionine + 2 oxidized [2Fe-2S]-[ferredoxin] + S-adenosyl-L-homocysteine. It catalyses the reaction adenosine(37) in tRNA + 2 reduced [2Fe-2S]-[ferredoxin] + 2 S-adenosyl-L-methionine = 2-methyladenosine(37) in tRNA + 5'-deoxyadenosine + L-methionine + 2 oxidized [2Fe-2S]-[ferredoxin] + S-adenosyl-L-homocysteine. Functionally, specifically methylates position 2 of adenine 2503 in 23S rRNA and position 2 of adenine 37 in tRNAs. The sequence is that of Probable dual-specificity RNA methyltransferase RlmN from Leptospira biflexa serovar Patoc (strain Patoc 1 / Ames).